A 635-amino-acid chain; its full sequence is Very-long-chain aldehyde decarbonylase GL1-6 (635 aa).

A run of 4 helical transmembrane segments spans residues 46–66 (LLNF…QLWI), 100–120 (IILT…AQVA), 127–147 (GMVV…YWLH), and 183–203 (VVYF…GTVS). The Fatty acid hydroxylase domain maps to 139 to 273 (VEFLYYWLHR…MPVYDYIYGT (135 aa)).

Belongs to the sterol desaturase family. As to quaternary structure, homodimer. As to expression, expressed in germinating seeds and shoots.

It is found in the endoplasmic reticulum membrane. The enzyme catalyses a long-chain fatty aldehyde + 2 NADPH + O2 + H(+) = a long-chain alkane + formate + 2 NADP(+) + H2O. Its function is as follows. Aldehyde decarbonylase involved in the conversion of aldehydes to alkanes. Core component of a very-long-chain alkane synthesis complex. This Oryza sativa subsp. japonica (Rice) protein is Very-long-chain aldehyde decarbonylase GL1-6.